Consider the following 75-residue polypeptide: Small, acid-soluble spore protein Tlp (75 aa).

This sequence belongs to the Tlp family.

The protein localises to the spore core. This is Small, acid-soluble spore protein Tlp from Geobacillus kaustophilus (strain HTA426).